Reading from the N-terminus, the 209-residue chain is Probable glutathione peroxidase 8-A (209 aa).

Residues 18–40 form a helical membrane-spanning segment; it reads VSVVFLSMLLCTGILCVLQLGFL. Residue cysteine 79 is part of the active site.

It belongs to the glutathione peroxidase family.

It localises to the membrane. The enzyme catalyses 2 glutathione + H2O2 = glutathione disulfide + 2 H2O. In Xenopus laevis (African clawed frog), this protein is Probable glutathione peroxidase 8-A (gpx8-a).